The following is a 122-amino-acid chain: Protein C10 (122 aa).

It belongs to the UPF0456 family.

Its subcellular location is the cytoplasm. This Danio rerio (Zebrafish) protein is Protein C10.